Consider the following 100-residue polypeptide: NADH-quinone oxidoreductase subunit K (100 aa).

A run of 3 helical transmembrane segments spans residues M1–G21, I28–A48, and F64–F84.

Belongs to the complex I subunit 4L family. In terms of assembly, NDH-1 is composed of 14 different subunits. Subunits NuoA, H, J, K, L, M, N constitute the membrane sector of the complex.

The protein localises to the cell inner membrane. It catalyses the reaction a quinone + NADH + 5 H(+)(in) = a quinol + NAD(+) + 4 H(+)(out). In terms of biological role, NDH-1 shuttles electrons from NADH, via FMN and iron-sulfur (Fe-S) centers, to quinones in the respiratory chain. The immediate electron acceptor for the enzyme in this species is believed to be ubiquinone. Couples the redox reaction to proton translocation (for every two electrons transferred, four hydrogen ions are translocated across the cytoplasmic membrane), and thus conserves the redox energy in a proton gradient. This is NADH-quinone oxidoreductase subunit K from Helicobacter pylori (strain B38).